A 962-amino-acid polypeptide reads, in one-letter code: Glycine dehydrogenase (decarboxylating) (962 aa).

At Lys-709 the chain carries N6-(pyridoxal phosphate)lysine.

The protein belongs to the GcvP family. In terms of assembly, the glycine cleavage system is composed of four proteins: P, T, L and H. The cofactor is pyridoxal 5'-phosphate.

The catalysed reaction is N(6)-[(R)-lipoyl]-L-lysyl-[glycine-cleavage complex H protein] + glycine + H(+) = N(6)-[(R)-S(8)-aminomethyldihydrolipoyl]-L-lysyl-[glycine-cleavage complex H protein] + CO2. Functionally, the glycine cleavage system catalyzes the degradation of glycine. The P protein binds the alpha-amino group of glycine through its pyridoxal phosphate cofactor; CO(2) is released and the remaining methylamine moiety is then transferred to the lipoamide cofactor of the H protein. This Shewanella pealeana (strain ATCC 700345 / ANG-SQ1) protein is Glycine dehydrogenase (decarboxylating).